A 252-amino-acid polypeptide reads, in one-letter code: MAVPEKSTKERLMSFLDDLEVLSRELIEMLALSRNQKLSQPGEENQILELLIQKDGEFQELMKVALSQGKIHQEMQVLEKEVEKRDSDIQQLQKQLKEAEHILATAVYQAKEKLKSIDKARKGAISSEELIKYAHRISASNAVCAPLTWVPGDPRRPYPTDLEMRSGLLGQMSNLPTNGVNGHLPGDALAAGRLPDVLAPQYPWQSNDMSMNMLPPNHSNEFLMESLGPNKENEEDVEVMSTDSSSSSSDSD.

Residues 70 to 112 (KIHQEMQVLEKEVEKRDSDIQQLQKQLKEAEHILATAVYQAKE) adopt a coiled-coil conformation. Residues 218–252 (HSNEFLMESLGPNKENEEDVEVMSTDSSSSSSDSD) form a disordered region. Residues 241–252 (STDSSSSSSDSD) are compositionally biased toward low complexity.

Belongs to the Mediator complex subunit 4 family. Component of the Mediator complex.

It is found in the nucleus. In terms of biological role, component of the Mediator complex, a coactivator involved in the regulated transcription of nearly all RNA polymerase II-dependent genes. Mediator functions as a bridge to convey information from gene-specific regulatory proteins to the basal RNA polymerase II transcription machinery. Mediator is recruited to promoters by direct interactions with regulatory proteins and serves as a scaffold for the assembly of a functional preinitiation complex with RNA polymerase II and the general transcription factors. The polypeptide is Mediator of RNA polymerase II transcription subunit 4 (med4) (Xenopus tropicalis (Western clawed frog)).